Here is a 320-residue protein sequence, read N- to C-terminus: NAD-dependent protein deacylase SIR2rp2 (320 aa).

The N-terminal 22 residues, 1-22 (MRPAGTLASFLERCSARKRGRG), are a transit peptide targeting the mitochondrion. Residues 23 to 320 (CVVLTGAGCS…MFFRRKTIQL (298 aa)) enclose the Deacetylase sirtuin-type domain. NAD(+) is bound by residues 28–48 (GAGC…GQYH) and 108–111 (QNVD). The active-site Proton acceptor is the H144. The Zn(2+) site is built by C152, C155, C207, and C210. Residues 248 to 250 (GTS), 274 to 276 (NAG), and G294 contribute to the NAD(+) site.

It belongs to the sirtuin family. Class II subfamily. The cofactor is Zn(2+).

Its subcellular location is the mitochondrion matrix. It catalyses the reaction N(6)-acetyl-L-lysyl-[protein] + NAD(+) + H2O = 2''-O-acetyl-ADP-D-ribose + nicotinamide + L-lysyl-[protein]. Its function is as follows. NAD-dependent protein deacylase. Catalyzes the NAD-dependent hydrolysis of acyl groups from lysine residues. The chain is NAD-dependent protein deacylase SIR2rp2 (SIR2rp2) from Leishmania major.